The sequence spans 356 residues: Glycerol-1-phosphate dehydrogenase [NAD(P)+] (356 aa).

NAD(+) is bound by residues 103 to 107 (GRSID) and 125 to 128 (TAAS). Asp-130 contributes to the substrate binding site. Ser-134 contacts NAD(+). Residue Asp-177 participates in substrate binding. The Zn(2+) site is built by Asp-177 and His-257. His-261 serves as a coordination point for substrate. His-273 serves as a coordination point for Zn(2+).

The protein belongs to the glycerol-1-phosphate dehydrogenase family. It depends on Zn(2+) as a cofactor.

The protein resides in the cytoplasm. The enzyme catalyses sn-glycerol 1-phosphate + NAD(+) = dihydroxyacetone phosphate + NADH + H(+). It catalyses the reaction sn-glycerol 1-phosphate + NADP(+) = dihydroxyacetone phosphate + NADPH + H(+). It functions in the pathway membrane lipid metabolism; glycerophospholipid metabolism. Its function is as follows. Catalyzes the NAD(P)H-dependent reduction of dihydroxyacetonephosphate (DHAP or glycerone phosphate) to glycerol 1-phosphate (G1P). The G1P thus generated is used as the glycerophosphate backbone of phospholipids in the cellular membranes of Archaea. This chain is Glycerol-1-phosphate dehydrogenase [NAD(P)+], found in Methanosarcina mazei (strain ATCC BAA-159 / DSM 3647 / Goe1 / Go1 / JCM 11833 / OCM 88) (Methanosarcina frisia).